The sequence spans 90 residues: Small ribosomal subunit protein uS15c (90 aa).

Positions 1–11 are enriched in polar residues; it reads MVKNSFSSVIS. Residues 1–20 form a disordered region; the sequence is MVKNSFSSVISQEEKKENGG.

It belongs to the universal ribosomal protein uS15 family. As to quaternary structure, part of the 30S ribosomal subunit.

Its subcellular location is the plastid. It localises to the chloroplast. The protein is Small ribosomal subunit protein uS15c (rps15) of Cucumis sativus (Cucumber).